Here is a 303-residue protein sequence, read N- to C-terminus: Glycine--tRNA ligase alpha subunit (303 aa).

The protein belongs to the class-II aminoacyl-tRNA synthetase family. In terms of assembly, tetramer of two alpha and two beta subunits.

The protein resides in the cytoplasm. It carries out the reaction tRNA(Gly) + glycine + ATP = glycyl-tRNA(Gly) + AMP + diphosphate. The protein is Glycine--tRNA ligase alpha subunit (glyQ) of Escherichia coli (strain K12).